The sequence spans 552 residues: Dihydroxy-acid dehydratase (552 aa).

Residue Cys-46 participates in [2Fe-2S] cluster binding. Asp-78 serves as a coordination point for Mg(2+). Cys-119 contributes to the [2Fe-2S] cluster binding site. Residues Asp-120 and Lys-121 each coordinate Mg(2+). An N6-carboxylysine modification is found at Lys-121. [2Fe-2S] cluster is bound at residue Cys-191. Glu-442 is a Mg(2+) binding site. Ser-468 serves as the catalytic Proton acceptor.

The protein belongs to the IlvD/Edd family. Homodimer. [2Fe-2S] cluster is required as a cofactor. The cofactor is Mg(2+).

The catalysed reaction is (2R)-2,3-dihydroxy-3-methylbutanoate = 3-methyl-2-oxobutanoate + H2O. The enzyme catalyses (2R,3R)-2,3-dihydroxy-3-methylpentanoate = (S)-3-methyl-2-oxopentanoate + H2O. The protein operates within amino-acid biosynthesis; L-isoleucine biosynthesis; L-isoleucine from 2-oxobutanoate: step 3/4. It functions in the pathway amino-acid biosynthesis; L-valine biosynthesis; L-valine from pyruvate: step 3/4. Functions in the biosynthesis of branched-chain amino acids. Catalyzes the dehydration of (2R,3R)-2,3-dihydroxy-3-methylpentanoate (2,3-dihydroxy-3-methylvalerate) into 2-oxo-3-methylpentanoate (2-oxo-3-methylvalerate) and of (2R)-2,3-dihydroxy-3-methylbutanoate (2,3-dihydroxyisovalerate) into 2-oxo-3-methylbutanoate (2-oxoisovalerate), the penultimate precursor to L-isoleucine and L-valine, respectively. In Picrophilus torridus (strain ATCC 700027 / DSM 9790 / JCM 10055 / NBRC 100828 / KAW 2/3), this protein is Dihydroxy-acid dehydratase.